Reading from the N-terminus, the 179-residue chain is uncharacterized protein (179 aa).

The segment at 53–82 (SPEREDPESPTRGVDEVDGACSEPPTPRPE) is disordered. A compositionally biased stretch (basic and acidic residues) spans 54–67 (PEREDPESPTRGVD).

This is an uncharacterized protein from Ictaluridae (bullhead catfishes).